The primary structure comprises 120 residues: Insulin-like peptide 3 (120 aa).

An N-terminal signal peptide occupies residues 1 to 29; the sequence is MGIEMRCQDRRILLPSLLLLILMIGGVQA. 3 cysteine pairs are disulfide-bonded: Cys34/Cys101, Cys46/Cys114, and Cys100/Cys105. Positions 51–89 are cleaved as a propeptide — connecting peptide; it reads NAMTKRTLDPVNFNQIDGFEDRSLLERLLSDSSVQMLKT.

Belongs to the insulin family. Heterodimer of a B chain and an A chain linked by two disulfide bonds. In terms of tissue distribution, expressed at a high level in seven cells of each larval brain hemisphere that may correspond to neurosecretory cells.

It is found in the secreted. Its function is as follows. Possible ligand of InR/insulin-like receptor. The chain is Insulin-like peptide 3 from Drosophila melanogaster (Fruit fly).